The following is a 1124-amino-acid chain: uncharacterized protein (1124 aa).

A signal peptide spans Met-1 to Ala-28. A run of 7 helical transmembrane segments spans residues Ile-332–Gly-352, Glu-359–Ile-379, Met-393–Met-413, Met-495–Val-515, Met-522–Ala-542, Met-555–Val-575, and Ile-700–Phe-720.

Belongs to the TrbL/VirB6 family.

The protein resides in the cell membrane. This is an uncharacterized protein from Rickettsia prowazekii (strain Madrid E).